The chain runs to 317 residues: Beta-ketoacyl-[acyl-carrier-protein] synthase III (317 aa).

Residues Cys-112 and His-244 contribute to the active site. Positions 245–249 are ACP-binding; sequence QANLR. The active site involves Asn-274.

This sequence belongs to the thiolase-like superfamily. FabH family. As to quaternary structure, homodimer.

It is found in the cytoplasm. The catalysed reaction is malonyl-[ACP] + acetyl-CoA + H(+) = 3-oxobutanoyl-[ACP] + CO2 + CoA. It functions in the pathway lipid metabolism; fatty acid biosynthesis. Catalyzes the condensation reaction of fatty acid synthesis by the addition to an acyl acceptor of two carbons from malonyl-ACP. Catalyzes the first condensation reaction which initiates fatty acid synthesis and may therefore play a role in governing the total rate of fatty acid production. Possesses both acetoacetyl-ACP synthase and acetyl transacylase activities. Its substrate specificity determines the biosynthesis of branched-chain and/or straight-chain of fatty acids. The protein is Beta-ketoacyl-[acyl-carrier-protein] synthase III of Baumannia cicadellinicola subsp. Homalodisca coagulata.